An 831-amino-acid polypeptide reads, in one-letter code: Periplasmic nitrate reductase (831 aa).

The tat-type signal signal peptide spans 1–29 (MTLSRRDFIKQTAVAATASVAGVTLPAGA). Positions 41-97 (LKWSKAPCRFCGTGCGVTVAVRDNKVVATNGDPQAEVNKGLNCVKGYFLSKIMYGQD) constitute a 4Fe-4S Mo/W bis-MGD-type domain. Residues C48, C51, C55, and C83 each coordinate [4Fe-4S] cluster. Mo-bis(molybdopterin guanine dinucleotide) contacts are provided by residues K85, Q152, N177, C181, 214-221 (WGSNMAEM), 245-249 (STFTH), 264-266 (QTD), M375, Q379, N485, 511-512 (SD), K534, D561, and 721-730 (TGRVLEHWHS). W797 provides a ligand contact to substrate. N805 and K822 together coordinate Mo-bis(molybdopterin guanine dinucleotide).

It belongs to the prokaryotic molybdopterin-containing oxidoreductase family. NasA/NapA/NarB subfamily. In terms of assembly, component of the periplasmic nitrate reductase NapAB complex composed of NapA and NapB. The cofactor is [4Fe-4S] cluster. It depends on Mo-bis(molybdopterin guanine dinucleotide) as a cofactor. Post-translationally, predicted to be exported by the Tat system. The position of the signal peptide cleavage has not been experimentally proven.

It is found in the periplasm. The enzyme catalyses 2 Fe(II)-[cytochrome] + nitrate + 2 H(+) = 2 Fe(III)-[cytochrome] + nitrite + H2O. In terms of biological role, catalytic subunit of the periplasmic nitrate reductase complex NapAB. Receives electrons from NapB and catalyzes the reduction of nitrate to nitrite. This is Periplasmic nitrate reductase from Cupriavidus taiwanensis (strain DSM 17343 / BCRC 17206 / CCUG 44338 / CIP 107171 / LMG 19424 / R1) (Ralstonia taiwanensis (strain LMG 19424)).